We begin with the raw amino-acid sequence, 465 residues long: MSFIRLHKDAAAMWLSRLLPAAIFILVGLFSIMVIRDYGRESAAARQTLLEKGNVLIRALESGTRVGMGMRMHHAQQQTLLEEMAGQPGVLWFAVTDAQGVIITHSNPGMVGKSLYSPSEMHQLNPGPQECWRRVDVAANGETVPALEIYRQFQPLFGMRGHGMRGHGMARSANDDEPAKQTIFIAFDASELAATQAREWRNTLIVLSALAAVLLATLLAFFWYQRYQRSHRELLDAMKRKEKLVAMGHLAAGVAHEIRNPLSSIKGLAKYFAERTPAGGESHELAQVMAKEADRLNRVVSELLELVKPAHLTLQAVNLNDIITHSLNLVSQDAQSREIQLRFTANETLKRIQADPDRLTQVLLNLYLNAIHAIGRQGTITVEAKESGTDRVIITVTDSGKGIAPDQLEAIFTPYFTTKADGTGLGLAVVQNIIEQHGGAIKVKSIEGKGAVFTIWLPVIARQQD.

Over Met1–Trp14 the chain is Cytoplasmic. A helical transmembrane segment spans residues Leu15–Ile35. The Periplasmic portion of the chain corresponds to Arg36–Thr203. The helical transmembrane segment at Leu204–Tyr224 threads the bilayer. At Gln225–Asp465 the chain is on the cytoplasmic side. The region spanning Gly253–Ala461 is the Histidine kinase domain. Position 256 is a phosphohistidine; by autocatalysis (His256).

Autophosphorylated.

It is found in the cell inner membrane. It carries out the reaction ATP + protein L-histidine = ADP + protein N-phospho-L-histidine.. Activity of the ZraS/ZraR two-component system is repressed by the zinc-bound form of ZraP, which probably interacts with the periplasmic region of ZraS. In terms of biological role, part of the Zra signaling pathway, an envelope stress response (ESR) system composed of the periplasmic accessory protein ZraP, the histidine kinase ZraS and the transcriptional regulator ZraR. The ZraPSR system contributes to antibiotic resistance and is important for membrane integrity in the presence of membrane-targeting biocides. ZraS is a member of the two-component regulatory system ZraS/ZraR. Functions as a membrane-associated sensor kinase that phosphorylates ZraR in response to high concentrations of Zn(2+) or Pb(2+) in the medium. The polypeptide is Sensor histidine kinase ZraS (zraS) (Salmonella typhi).